A 500-amino-acid chain; its full sequence is NF-kappa-B inhibitor epsilon (500 aa).

Positions 1–10 (MNQRRSESRP) are enriched in basic and acidic residues. 3 disordered regions span residues 1-66 (MNQR…PAWA), 84-215 (LSSL…YGSS), and 222-241 (SLLGGPEAEDPAPRLPLPHV). Residues serine 157, serine 161, and serine 183 each carry the phosphoserine modification. Low complexity predominate over residues 161–186 (SLRSLRSLPESTSAPASGPSDGSPQP). Residues 196 to 209 (EPQEKEDADGERAD) show a composition bias toward basic and acidic residues. ANK repeat units lie at residues 258-291 (DGDTLVHLAVIHEAPAVLLCCLALLPQEVLDIQN), 293-322 (LYQTALHLAVHLDQPGAVRALVLKGASRAL), 326-355 (HGDTALHVACQRQHLACARCLLEGRPEPGR), 369-398 (QGLACLHIATLQKNQPLMELLLRNGADIDV), 403-432 (SGKTALHLAVETQERGLVQFLLQAGAQVDA), and 436-465 (NGCTPLHLAAGRGLMGISSTLCKAGADSLL).

Belongs to the NF-kappa-B inhibitor family. As to quaternary structure, interacts with RELA, REL, NFKB1 nuclear factor NF-kappa-B p50 subunit and NFKB2 nuclear factor NF-kappa-B p52 subunit. Interacts with HNRNPA2B1; the interaction may be mediated by the RRM2 domain of HNRNPA2B1, and HNRNPA2B1 may interact simultaneously with FAM76B and either NFKBIA or NFKBIE to form a complex. Post-translationally, serine phosphorylated; followed by proteasome-dependent degradation. In terms of tissue distribution, highly expressed in spleen, testis and lung, followed by kidney, pancreas, heart, placenta and brain. Also expressed in granulocytes and macrophages.

It localises to the cytoplasm. In terms of biological role, sequesters NF-kappa-B transcription factor complexes in the cytoplasm, thereby inhibiting their activity. Sequestered complexes include NFKB1-RELA (p50-p65) and NFKB1-REL (p50-c-Rel) complexes. Limits B-cell activation in response to pathogens, and also plays an important role in B-cell development. The protein is NF-kappa-B inhibitor epsilon (NFKBIE) of Homo sapiens (Human).